The sequence spans 427 residues: MGSVRTNRYSIVSSEEDGMKLATMAVANGFGNGKSKVHTRQQCRSRFVKKDGHCNVQFINVGEKGQRYLADIFTTCVDIRWRWMLVIFCLTFILSWLFFGCVFWLIALLHGDLENQENNKPCVSQVSSFTAAFLFSIETQTTIGYGFRCVTDECPIAVFMVVFQSIVGCIIDAFIIGAVMAKMAKPKKRNETLVFSHNAVVAMRDGKLCLMWRVGNLRKSHLVEAHVRAQLLKSRITSEGEYIPLDEIDINVGFDSGIDRIFLVSPITIVHEIDEDSPLYDLSKQDMDNADFEIVVILEGMVEATAMTTQCRSSYLANEILWGHRYEPVLFEEKNYYKVDYSRFHKTYEVPNTPICSARDLAEKKYILSNANSFCYENEVALTSKEEDEIDTGVPESTSTDTHPDMDHHNQAGVPLEPRPLRRESEI.

The Cytoplasmic portion of the chain corresponds to 1–81 (MGSVRTNRYS…IFTTCVDIRW (81 aa)). A helical membrane pass occupies residues 82-106 (RWMLVIFCLTFILSWLFFGCVFWLI). The Extracellular portion of the chain corresponds to 107 to 128 (ALLHGDLENQENNKPCVSQVSS). The segment at residues 129-140 (FTAAFLFSIETQ) is an intramembrane region (helical; Pore-forming). The pore-forming intramembrane region spans 141 to 147 (TTIGYGF). Positions 142–147 (TIGYGF) match the Selectivity filter motif. Residues 148–156 (RCVTDECPI) are Extracellular-facing. Residues 157–178 (AVFMVVFQSIVGCIIDAFIIGA) traverse the membrane as a helical segment. Over 179 to 427 (VMAKMAKPKK…PRPLRRESEI (249 aa)) the chain is Cytoplasmic. Residues 181–208 (AKMAKPKKRNETLVFSHNAVVAMRDGKL) form a polyphosphoinositide (PIP2)-binding region. Residues 386-427 (EEDEIDTGVPESTSTDTHPDMDHHNQAGVPLEPRPLRRESEI) form a disordered region. Residues 425–427 (SEI) carry the PDZ-binding motif.

Belongs to the inward rectifier-type potassium channel (TC 1.A.2.1) family. KCNJ2 subfamily. In terms of assembly, homotetramer. Homomultimeric and heteromultimeric association with KCNJ4/Kir2.3, resulting in an enhanced G-protein-induced current. Associates, via its PDZ-recognition domain, with a complex containing LIN7A, LIN7B, LIN7C, DLG1, CASK and APBA1. In terms of tissue distribution, found in the apical basilar papilla of the inner ear, brain, muscle, cerebellum, heart and liver.

The protein resides in the cell membrane. It localises to the sarcolemma. Its subcellular location is the T-tubule. The enzyme catalyses K(+)(in) = K(+)(out). With respect to regulation, activated by phosphatidylinositol 4,5 biphosphate (PtdIns(4,5)P2). Functionally, inward rectifier potassium channels are characterized by a greater tendency to allow potassium to flow into the cell rather than out of it. Their voltage dependence is regulated by the concentration of extracellular potassium; as external potassium is raised, the voltage range of the channel opening shifts to more positive voltages. The inward rectification is mainly due to the blockage of outward current by internal magnesium. Can be blocked by external barium. Probably participates in establishing action potential waveform and excitability of neuronal and muscle tissues. The sequence is that of Inward rectifier potassium channel 2 (KCNJ2) from Gallus gallus (Chicken).